We begin with the raw amino-acid sequence, 339 residues long: Putative clathrin assembly protein At1g14686 (339 aa).

The 133-residue stretch at 16 to 148 folds into the ENTH domain; that stretch reads SLIAADDILT…ILFHDGNRHR (133 aa). The interval 283–307 is disordered; it reads ESSEESAERTEIAEEEEEEEEEIET. Positions 295–305 are enriched in acidic residues; that stretch reads AEEEEEEEEEI.

Its subcellular location is the membrane. The protein localises to the clathrin-coated pit. It localises to the golgi apparatus. It is found in the cytoplasmic vesicle. The protein resides in the clathrin-coated vesicle. The polypeptide is Putative clathrin assembly protein At1g14686 (Arabidopsis thaliana (Mouse-ear cress)).